The sequence spans 212 residues: Fibrillarin-like rRNA/tRNA 2'-O-methyltransferase (212 aa).

S-adenosyl-L-methionine is bound by residues 76–77 (TT), 94–95 (EL), 119–120 (DA), and 139–142 (DIAQ).

Belongs to the methyltransferase superfamily. Fibrillarin family. In terms of assembly, interacts with nop5. Component of box C/D small ribonucleoprotein (sRNP) particles that contain rpl7ae, FlpA and nop5, plus a guide RNA.

In terms of biological role, involved in pre-rRNA and tRNA processing. Utilizes the methyl donor S-adenosyl-L-methionine to catalyze the site-specific 2'-hydroxyl methylation of ribose moieties in rRNA and tRNA. Site specificity is provided by a guide RNA that base pairs with the substrate. Methylation occurs at a characteristic distance from the sequence involved in base pairing with the guide RNA. The protein is Fibrillarin-like rRNA/tRNA 2'-O-methyltransferase of Picrophilus torridus (strain ATCC 700027 / DSM 9790 / JCM 10055 / NBRC 100828 / KAW 2/3).